A 371-amino-acid chain; its full sequence is Cytokine receptor-like factor 2 (371 aa).

A signal peptide spans methionine 1–glycine 22. The Extracellular segment spans residues glutamine 23–lysine 231. Asparagine 47 and asparagine 55 each carry an N-linked (GlcNAc...) asparagine glycan. Cysteine 71 and cysteine 84 form a disulfide bridge. Asparagine 101 and asparagine 169 each carry an N-linked (GlcNAc...) asparagine glycan. The Fibronectin type-III domain maps to lysine 118–arginine 211. Cysteines 180 and 218 form a disulfide. Residues proline 200–serine 204 carry the WSXWS motif motif. Residues phenylalanine 232–tryptophan 252 traverse the membrane as a helical segment. The Cytoplasmic portion of the chain corresponds to lysine 253–leucine 371. A Box 1 motif motif is present at residues leucine 261–lysine 269. Basic and acidic residues predominate over residues glutamate 322–alanine 336. The segment at glutamate 322–proline 347 is disordered.

The protein belongs to the type I cytokine receptor family. Type 5 subfamily. Heterodimer of CRLF2 and IL7R. In terms of tissue distribution, expressed in heart, skeletal muscle, kidney and adult and fetal liver. Primarily expressed in dendrites and monocytes. Weakly expressed in T-cells.

It localises to the cell membrane. The protein resides in the secreted. Receptor for thymic stromal lymphopoietin (TSLP). Forms a functional complex with TSLP and IL7R which is capable of stimulating cell proliferation through activation of STAT3 and STAT5. Also activates JAK2. Implicated in the development of the hematopoietic system. The sequence is that of Cytokine receptor-like factor 2 (CRLF2) from Homo sapiens (Human).